The following is a 382-amino-acid chain: Sialidase (382 aa).

Arg37 lines the substrate pocket. Asp62 serves as the catalytic Proton acceptor. BNR repeat units lie at residues 71-82, 140-151, and 208-219; these read ARSTDFGKTWSY, IYSDDNGLTWSN, and IYSKDNGETWTM. Arg245 serves as a coordination point for substrate. The BNR 4 repeat unit spans residues 255–266; it reads YISHDLGTTWEI. The Nucleophile role is filled by Tyr347.

Belongs to the glycosyl hydrolase 33 family.

Its subcellular location is the secreted. The catalysed reaction is Hydrolysis of alpha-(2-&gt;3)-, alpha-(2-&gt;6)-, alpha-(2-&gt;8)- glycosidic linkages of terminal sialic acid residues in oligosaccharides, glycoproteins, glycolipids, colominic acid and synthetic substrates.. In terms of biological role, sialidases have been suggested to be pathogenic factors in microbial infections. This Clostridium perfringens protein is Sialidase (nanH).